The primary structure comprises 520 residues: Polyprenol-phosphate-mannose--protein mannosyltransferase (520 aa).

The next 10 helical transmembrane spans lie at 38-58 (WAII…SATA), 119-139 (LGWR…IMAI), 145-165 (GSTM…VLLV), 168-188 (RFGM…WALI), 237-257 (WSGL…DLWL), 274-294 (DVIP…IWSW), 388-408 (IYLF…LWAL), 418-438 (GYVV…AAYD), 441-461 (MYFF…ALAC), and 485-505 (YISL…GFVI).

Belongs to the glycosyltransferase 39 family.

It is found in the cell membrane. The protein operates within protein modification; protein glycosylation. In terms of biological role, protein O-mannosyltransferase that catalyzes the transfer of a single mannose residue from a polyprenol phospho-mannosyl lipidic donor to the hydroxyl group of selected serine and threonine residues in acceptor proteins. This chain is Polyprenol-phosphate-mannose--protein mannosyltransferase (pmt), found in Corynebacterium glutamicum (strain ATCC 13032 / DSM 20300 / JCM 1318 / BCRC 11384 / CCUG 27702 / LMG 3730 / NBRC 12168 / NCIMB 10025 / NRRL B-2784 / 534).